Here is a 59-residue protein sequence, read N- to C-terminus: Potassium channel toxin alpha-KTx 15.4 (59 aa).

The signal sequence occupies residues 1 to 22 (MKFSSIILLTLLICSMSIFGNC). Q23 carries the post-translational modification Pyrrolidone carboxylic acid. 3 cysteine pairs are disulfide-bonded: C30-C50, C35-C55, and C39-C57.

In terms of tissue distribution, expressed by the venom gland.

Its subcellular location is the secreted. Functionally, blocker of A-type voltage-gated potassium channels of cerebellar granular cells. May also inhibit Kv4/KCND when coexpressed with DPP6 or DPP10. The occlusion of the outer entry of the K(+) conducting pore is partially reversible and affects both open and closed channels. It shares the same target in rat brain than BmTX3 (AC Q8I0L5) and AmmTX3 (AC P60208). The protein is Potassium channel toxin alpha-KTx 15.4 of Androctonus australis (Sahara scorpion).